A 150-amino-acid chain; its full sequence is Arginine repressor (150 aa).

The protein belongs to the ArgR family.

The protein resides in the cytoplasm. Its pathway is amino-acid biosynthesis; L-arginine biosynthesis [regulation]. Its function is as follows. Regulates arginine biosynthesis genes. This Clostridium botulinum (strain Alaska E43 / Type E3) protein is Arginine repressor.